We begin with the raw amino-acid sequence, 418 residues long: Tyrosine--tRNA ligase (418 aa).

L-tyrosine is bound at residue Tyr-34. The 'HIGH' region signature appears at 39-48 (PTGDSMHIGH). L-tyrosine-binding residues include Tyr-166 and Gln-170. Residues 228 to 232 (KFGKT) carry the 'KMSKS' region motif. Lys-231 is a binding site for ATP. An S4 RNA-binding domain is found at 350 to 418 (QNIVLWLVDA…KKRYFLAHVK (69 aa)).

Belongs to the class-I aminoacyl-tRNA synthetase family. TyrS type 1 subfamily. As to quaternary structure, homodimer.

Its subcellular location is the cytoplasm. The catalysed reaction is tRNA(Tyr) + L-tyrosine + ATP = L-tyrosyl-tRNA(Tyr) + AMP + diphosphate + H(+). Catalyzes the attachment of tyrosine to tRNA(Tyr) in a two-step reaction: tyrosine is first activated by ATP to form Tyr-AMP and then transferred to the acceptor end of tRNA(Tyr). This Lactiplantibacillus plantarum (strain ATCC BAA-793 / NCIMB 8826 / WCFS1) (Lactobacillus plantarum) protein is Tyrosine--tRNA ligase.